Here is a 111-residue protein sequence, read N- to C-terminus: Dynein light chain Tctex-type (111 aa).

It belongs to the dynein light chain Tctex-type family.

It localises to the cytoplasm. The protein localises to the cytoskeleton. In terms of biological role, acts as a non-catalytic accessory component of a dynein complex. This chain is Dynein light chain Tctex-type (dlc1), found in Schizosaccharomyces pombe (strain 972 / ATCC 24843) (Fission yeast).